Here is a 564-residue protein sequence, read N- to C-terminus: Proline--tRNA ligase (564 aa).

It belongs to the class-II aminoacyl-tRNA synthetase family. ProS type 1 subfamily. As to quaternary structure, homodimer.

Its subcellular location is the cytoplasm. The catalysed reaction is tRNA(Pro) + L-proline + ATP = L-prolyl-tRNA(Pro) + AMP + diphosphate. Functionally, catalyzes the attachment of proline to tRNA(Pro) in a two-step reaction: proline is first activated by ATP to form Pro-AMP and then transferred to the acceptor end of tRNA(Pro). As ProRS can inadvertently accommodate and process non-cognate amino acids such as alanine and cysteine, to avoid such errors it has two additional distinct editing activities against alanine. One activity is designated as 'pretransfer' editing and involves the tRNA(Pro)-independent hydrolysis of activated Ala-AMP. The other activity is designated 'posttransfer' editing and involves deacylation of mischarged Ala-tRNA(Pro). The misacylated Cys-tRNA(Pro) is not edited by ProRS. The sequence is that of Proline--tRNA ligase from Coxiella burnetii (strain Dugway 5J108-111).